The chain runs to 558 residues: Arginine--tRNA ligase (558 aa).

The 'HIGH' region signature appears at 129–139 (ANPTGPLHVGH).

The protein belongs to the class-I aminoacyl-tRNA synthetase family. Monomer.

Its subcellular location is the cytoplasm. The enzyme catalyses tRNA(Arg) + L-arginine + ATP = L-arginyl-tRNA(Arg) + AMP + diphosphate. In Polaromonas naphthalenivorans (strain CJ2), this protein is Arginine--tRNA ligase.